We begin with the raw amino-acid sequence, 210 residues long: 3-hexulose-6-phosphate synthase (210 aa).

It belongs to the HPS/KGPDC family. HPS subfamily.

The catalysed reaction is D-ribulose 5-phosphate + formaldehyde = D-arabino-hex-3-ulose 6-phosphate. It participates in one-carbon metabolism; formaldehyde assimilation via RuMP pathway; D-fructose 6-phosphate from D-ribulose 5-phosphate and formaldehyde: step 1/2. Its function is as follows. Catalyzes the condensation of ribulose 5-phosphate with formaldehyde to form 3-hexulose 6-phosphate. This chain is 3-hexulose-6-phosphate synthase, found in Staphylococcus aureus (strain MRSA252).